Here is a 296-residue protein sequence, read N- to C-terminus: tRNA (guanine(9)-N1)-methyltransferase (296 aa).

Positions 1 to 33 (MTPETNNDETLSRPKPRAALPPVPEGMSKSQWK) are disordered. The 190-residue stretch at 85–274 (TPRVNVNQKD…SVLPARKLAE (190 aa)) folds into the SAM-dependent MTase TRM10-type domain. S-adenosyl-L-methionine is bound by residues 181–182 (LT), Gly201, 205–209 (DKNRH), Cys213, Leu227, and 239–241 (KVL). Asp205 (proton acceptor) is an active-site residue. The tract at residues 277 to 296 (DHAQESNSSSPAEEQDAQDI) is disordered.

It belongs to the class IV-like SAM-binding methyltransferase superfamily. TRM10 family. Monomer.

Its subcellular location is the cytoplasm. It localises to the nucleus. It catalyses the reaction guanosine(9) in tRNA + S-adenosyl-L-methionine = N(1)-methylguanosine(9) in tRNA + S-adenosyl-L-homocysteine + H(+). S-adenosyl-L-methionine-dependent guanine N(1)-methyltransferase that catalyzes the formation of N(1)-methylguanine at position 9 (m1G9) in cytoplasmic tRNA. The chain is tRNA (guanine(9)-N1)-methyltransferase from Eremothecium gossypii (strain ATCC 10895 / CBS 109.51 / FGSC 9923 / NRRL Y-1056) (Yeast).